A 1219-amino-acid chain; its full sequence is Type IV pilus biogenesis factor PilY1 homolog PD_0502 (1219 aa).

The signal sequence occupies residues methionine 1–alanine 35. Positions glycine 212 to serine 234 are disordered. 4 residues coordinate Ca(2+): glutamine 958, asparagine 960, isoleucine 962, and aspartate 964.

Belongs to the PilY1 family.

It localises to the fimbrium. One of the three PilY1 homologs of X.fastidiosa, which are involved in bacterial twitching motility as component of the filamentous type IV pili (T4P). This Xylella fastidiosa (strain Temecula1 / ATCC 700964) protein is Type IV pilus biogenesis factor PilY1 homolog PD_0502.